The following is a 288-amino-acid chain: Nucleotide-binding protein Neut_1559 (288 aa).

Residue G8–S15 participates in ATP binding. D57 to S60 serves as a coordination point for GTP.

This sequence belongs to the RapZ-like family.

Its function is as follows. Displays ATPase and GTPase activities. The polypeptide is Nucleotide-binding protein Neut_1559 (Nitrosomonas eutropha (strain DSM 101675 / C91 / Nm57)).